We begin with the raw amino-acid sequence, 365 residues long: MSKAPEDQRPMPRRPAAFSLEEPSSSPARPPFAEAQEPQRRAPKSFDANVTITPDAEDPFLAGLSEDEAILPIARPAKRRFSFGKLAGAAFGALASFAIGLWIDDLIRDLFTRADWLGYTALTLLGIGLLALTVVVIRELAGIYRLNAVQAIKQRASALSLQGTASEARKLVKDVEDLTQHRAETARGRSVLKAAENDIIDAPHLIALAERELLAPLDAKARSLIINASKRVSVVTAVSPRALVDLAYVLFEVVRLVRAMAELYGGRPGSIGMLRLLRDVFAHLAVTGSIAIGDGLAQQVLGHGLASRLSARLGEGVINGLMTARIGIAAMDLCRPLEFKALRRPGIGDFMPALKPAINPDSKAL.

Residues 1-10 (MSKAPEDQRP) show a composition bias toward basic and acidic residues. The disordered stretch occupies residues 1 to 47 (MSKAPEDQRPMPRRPAAFSLEEPSSSPARPPFAEAQEPQRRAPKSFD). Transmembrane regions (helical) follow at residues 83-103 (FGKL…GLWI) and 117-137 (LGYT…VVVI).

This sequence belongs to the UPF0283 family.

The protein localises to the cell inner membrane. The protein is UPF0283 membrane protein Avi_2471 of Allorhizobium ampelinum (strain ATCC BAA-846 / DSM 112012 / S4) (Agrobacterium vitis (strain S4)).